A 383-amino-acid chain; its full sequence is Acetylornithine deacetylase (383 aa).

His-80 is a binding site for Zn(2+). Asp-82 is a catalytic residue. Residue Asp-112 coordinates Zn(2+). Glu-144 is a catalytic residue. Zn(2+) contacts are provided by Glu-145, Glu-169, and His-355.

The protein belongs to the peptidase M20A family. ArgE subfamily. As to quaternary structure, homodimer. The cofactor is Zn(2+). It depends on Co(2+) as a cofactor. Requires glutathione as cofactor.

Its subcellular location is the cytoplasm. The enzyme catalyses N(2)-acetyl-L-ornithine + H2O = L-ornithine + acetate. Its pathway is amino-acid biosynthesis; L-arginine biosynthesis; L-ornithine from N(2)-acetyl-L-ornithine (linear): step 1/1. In terms of biological role, catalyzes the hydrolysis of the amide bond of N(2)-acetylated L-amino acids. Cleaves the acetyl group from N-acetyl-L-ornithine to form L-ornithine, an intermediate in L-arginine biosynthesis pathway, and a branchpoint in the synthesis of polyamines. The chain is Acetylornithine deacetylase from Escherichia coli O45:K1 (strain S88 / ExPEC).